A 615-amino-acid polypeptide reads, in one-letter code: Proteasome-associated ATPase (615 aa).

Residues 1–13 show a composition bias toward basic and acidic residues; sequence MSESQRHEAREDG. Residues 1–32 are disordered; it reads MSESQRHEAREDGFTTPHESGLSSEDAAELEE. The stretch at 22–100 forms a coiled coil; it reads LSSEDAAELE…LREEVDRLGQ (79 aa). Position 302 to 307 (302 to 307) interacts with ATP; sequence GCGKTL. Residues 614-615 are docks into pockets in the proteasome alpha-ring; sequence YL.

Belongs to the AAA ATPase family. In terms of assembly, homohexamer. Assembles into a hexameric ring structure that caps the 20S proteasome core. Strongly interacts with the prokaryotic ubiquitin-like protein Pup through a hydrophobic interface; the interacting region of ARC lies in its N-terminal coiled-coil domain. There is one Pup binding site per ARC hexamer ring. Upon ATP-binding, the C-terminus of ARC interacts with the alpha-rings of the proteasome core, possibly by binding to the intersubunit pockets.

The protein operates within protein degradation; proteasomal Pup-dependent pathway. In terms of biological role, ATPase which is responsible for recognizing, binding, unfolding and translocation of pupylated proteins into the bacterial 20S proteasome core particle. May be essential for opening the gate of the 20S proteasome via an interaction with its C-terminus, thereby allowing substrate entry and access to the site of proteolysis. Thus, the C-termini of the proteasomal ATPase may function like a 'key in a lock' to induce gate opening and therefore regulate proteolysis. This is Proteasome-associated ATPase from Mycobacterium sp. (strain JLS).